The sequence spans 494 residues: Inositol-trisphosphate 3-kinase homolog (494 aa).

ATP contacts are provided by residues Ser-206, Lys-218, 260–262 (EDL), and Asp-276. Substrate is bound by residues Lys-278 and 322-329 (KLRYMQFR). 2 residues coordinate ATP: Lys-346 and Asp-426. Lys-429 serves as a coordination point for substrate.

It belongs to the inositol phosphokinase (IPK) family. Expressed in spermatheca.

The enzyme catalyses 1D-myo-inositol 1,4,5-trisphosphate + ATP = 1D-myo-inositol 1,3,4,5-tetrakisphosphate + ADP + H(+). Its activity is regulated as follows. Unlike mammalian IP3K, may not be regulated by calmodulin. Its function is as follows. Probably by regulating inositol 1,4,5-trisphosphate levels, negatively regulates posterior body wall muscle contractions required for defecation and let-23 signaling pathway that controls spermathecal dilation and ovulation. May also regulate ovulation downstream of actin cross-linker fln-1. This is Inositol-trisphosphate 3-kinase homolog from Caenorhabditis elegans.